The chain runs to 321 residues: PI-PLC X domain-containing protein 3 (321 aa).

The PI-PLC X-box domain occupies 22-197 (SMHSIPLTNL…DYQVLVFYHS (176 aa)). Residues H37 and H114 contribute to the active site.

Expressed at highest levels in heart. Also detected in kidney, lung, small intestine and colon. Expressed at very low levels, if any, in leukocytes, thymus and skeletal muscle.

The protein resides in the cytoplasm. The sequence is that of PI-PLC X domain-containing protein 3 (PLCXD3) from Homo sapiens (Human).